We begin with the raw amino-acid sequence, 273 residues long: Cell division protein ZipA (273 aa).

Residue Met1 is a topological domain, periplasmic. Residues 2–22 (DIGLREWLIVIGIIVIAGILF) traverse the membrane as a helical segment. Topologically, residues 23-273 (DGWRRMRGGK…ERRQMTIKQR (251 aa)) are cytoplasmic. Residues 61-127 (VVNREHEPSL…DLQERPQKEQ (67 aa)) are disordered.

Belongs to the ZipA family. Interacts with FtsZ via their C-terminal domains.

It is found in the cell inner membrane. Essential cell division protein that stabilizes the FtsZ protofilaments by cross-linking them and that serves as a cytoplasmic membrane anchor for the Z ring. Also required for the recruitment to the septal ring of downstream cell division proteins. The sequence is that of Cell division protein ZipA from Stutzerimonas stutzeri (strain A1501) (Pseudomonas stutzeri).